We begin with the raw amino-acid sequence, 225 residues long: Uracil-DNA glycosylase (225 aa).

Aspartate 68 serves as the catalytic Proton acceptor.

The protein belongs to the uracil-DNA glycosylase (UDG) superfamily. UNG family.

The protein localises to the cytoplasm. The enzyme catalyses Hydrolyzes single-stranded DNA or mismatched double-stranded DNA and polynucleotides, releasing free uracil.. Functionally, excises uracil residues from the DNA which can arise as a result of misincorporation of dUMP residues by DNA polymerase or due to deamination of cytosine. The protein is Uracil-DNA glycosylase of Mycolicibacterium gilvum (strain PYR-GCK) (Mycobacterium gilvum (strain PYR-GCK)).